The primary structure comprises 206 residues: Urease accessory protein UreG (206 aa).

13–20 (GPVGSGKT) provides a ligand contact to GTP.

This sequence belongs to the SIMIBI class G3E GTPase family. UreG subfamily. In terms of assembly, homodimer. UreD, UreF and UreG form a complex that acts as a GTP-hydrolysis-dependent molecular chaperone, activating the urease apoprotein by helping to assemble the nickel containing metallocenter of UreC. The UreE protein probably delivers the nickel.

The protein localises to the cytoplasm. Its function is as follows. Facilitates the functional incorporation of the urease nickel metallocenter. This process requires GTP hydrolysis, probably effectuated by UreG. This chain is Urease accessory protein UreG, found in Natronomonas pharaonis (strain ATCC 35678 / DSM 2160 / CIP 103997 / JCM 8858 / NBRC 14720 / NCIMB 2260 / Gabara) (Halobacterium pharaonis).